We begin with the raw amino-acid sequence, 810 residues long: MKMMMIMKTTLLLISVLLTQALQSQGRPAIQDEAPAEPTSYTLDSGEKLELSCKAKEDTQKVTWTKDLVPLVDGEHTRLRNDQMEIEKVEPTDSGLYACFAQGLNSNHTEYFNISVTDEEDEVDSSSEEAKLSNDQNLPMAPVWAQPDKMEKKLHAVPASKTVKFRCQANGNPTPTLKWLKNGKEFKRDQRIGGFKVREHMWTIIMESVVPSDRGNYTCLVENRHGSINHTYQLDVVERSPHRPILQAGLPANRTAVVGSDVEFECKVFSDPQPHIQWLKHIEVNGSRYGPDGLPYVRALKTAGVNTTDKEMEVLQIRNVSLEDAGEYTCLAGNSIGHSHHSAWLTVYKAVPPTQLPNQTYLEVLIYCVGFFLICVMVGTAVLAKMHSSAKKSDFNSQLAVHKLAKSIPLRRQVTVSVDSSSSMHSGGMLVRPSRLSSSGSPMLSGVSEYELPQDPRWEVQRDRLVLGKPLGEGCFGQVMMAEAMGMDKEKPNRITKVAVKMLKSDATEKDLSDLISEMEMMKIIGKHKNIINLLGACTQDGPLYVIVEFAAKGNLREYLRVRRPPGMEYCYNPDQVPVENMSIKDLVSCAYQVARGMEYLASKKCIHRDLAARNVLVTEDNVMKIADFGLARDIHHIDYYKKTTNGRLPVKWMAPEALFDRIYTHQSDVWSFGVLLWEIFTLGGSPYPGVPVEELFKLLKEGHRMDRPSTCTHELYMMMRDCWHAVPSQRPTFKQLVEDLDRTLSMTSNQEYLDLSVSLDQFSPNFPDTRSSTCSSGEDSVFSHDAGADEPCLPKFPPHPNRGVAFKKR.

Residues 1–26 (MKMMMIMKTTLLLISVLLTQALQSQG) form the signal peptide. Residues 27-363 (RPAIQDEAPA…TQLPNQTYLE (337 aa)) are Extracellular-facing. Ig-like C2-type domains follow at residues 28 to 115 (PAIQ…FNIS), 147 to 235 (PDKM…YQLD), and 244 to 346 (PILQ…AWLT). A disulfide bond links C53 and C99. 9 N-linked (GlcNAc...) asparagine glycosylation sites follow: N107, N113, N216, N229, N253, N285, N306, N319, and N358. A disulfide bridge links C167 with C219. C266 and C330 are disulfide-bonded. The chain crosses the membrane as a helical span at residues 364 to 384 (VLIYCVGFFLICVMVGTAVLA). Residues 385 to 810 (KMHSSAKKSD…PNRGVAFKKR (426 aa)) lie on the Cytoplasmic side of the membrane. Y450 carries the post-translational modification Phosphotyrosine; by autocatalysis. A Protein kinase domain is found at 465–754 (LVLGKPLGEG…LSMTSNQEYL (290 aa)). ATP-binding positions include 471–477 (LGEGCFG), K501, 549–551 (EFA), and N555. Phosphotyrosine; by autocatalysis occurs at positions 570 and 572. The Proton acceptor role is filled by D610. Residues R614 and D628 each contribute to the ATP site. Y640, Y641, Y717, and Y753 each carry phosphotyrosine; by autocatalysis. The interval 787 to 810 (AGADEPCLPKFPPHPNRGVAFKKR) is disordered.

This sequence belongs to the protein kinase superfamily. Tyr protein kinase family. Fibroblast growth factor receptor subfamily. Monomer. Homodimer after ligand binding. Interacts with cnpy1. Autophosphorylated. Binding of FGF family members together with heparan sulfate proteoglycan or heparin promotes receptor dimerization and autophosphorylation on tyrosine residues. Autophosphorylation occurs in trans between the two FGFR molecules present in the dimer and proceeds in a highly ordered manner. Phosphotyrosine residues provide docking sites for interacting proteins and so are crucial for FGFR1 function and its regulation. In terms of processing, ubiquitinated. FGFR1 is rapidly ubiquitinated after autophosphorylation, leading to internalization and degradation. Post-translationally, N-glycosylated in the endoplasmic reticulum. The N-glycan chains undergo further maturation to an Endo H-resistant form in the Golgi apparatus. Initially expressed in adaxial mesoderm with transcripts distinctly localized to the anterior portion of each half-somite. Hereupon, also strongly expressed in the otic vesicles, branchial arches and the brain, especially at the midbrain-hindbrain boundary (MHB).

It localises to the cell membrane. It is found in the nucleus. The protein localises to the cytoplasm. The protein resides in the cytosol. Its subcellular location is the cytoplasmic vesicle. The enzyme catalyses L-tyrosyl-[protein] + ATP = O-phospho-L-tyrosyl-[protein] + ADP + H(+). Its activity is regulated as follows. Present in an inactive conformation in the absence of bound ligand. Ligand binding leads to dimerization and activation by sequential autophosphorylation on tyrosine residues. Functionally, tyrosine-protein kinase that acts as a cell-surface receptor for fibroblast growth factors and plays an essential role in the regulation of embryonic development, cell proliferation, differentiation and migration. Required for normal mesoderm patterning and normal skeletogenesis. Phosphorylates PLCG1, FRS2, GAB1 and SHB. Ligand binding leads to the activation of several signaling cascades. Activation of PLCG1 leads to the production of the cellular signaling molecules diacylglycerol and inositol-1,4,5-trisphosphate. Phosphorylation of FRS2 triggers recruitment of GRB2, GAB1, PIK3R1 and SOS1, and mediates activation of RAS, MAPK1/ERK2, MAPK3/ERK1 and the MAP kinase signaling pathway, as well as of the AKT1 signaling pathway. Promotes phosphorylation of SHC1, STAT1 and PTPN11/SHP2. In the nucleus, enhances RPS6KA1 and CREB1 activity and contributes to the regulation of transcription. FGFR1 signaling is down-regulated by ubiquitination, internalization and degradation. The sequence is that of Fibroblast growth factor receptor 1-A (fgfr1a) from Danio rerio (Zebrafish).